Here is a 555-residue protein sequence, read N- to C-terminus: F-box only protein 33 (555 aa).

One can recognise an F-box domain in the interval 65–111 (AAGAASLPSELIVHIFSFLPAPDRLRASASCSHWRECLFYPALWPQL).

Part of the SCF (SKP1-CUL1-F-box) E3 ubiquitin-protein ligase complex SCF(FBXO33) formed of CUL1, SKP1, RBX1 and FBXO33. Interacts via its N-terminus with YBX1 CSD domain. Directly interacts with SKP1 and CUL1.

The protein operates within protein modification; protein ubiquitination. Functionally, substrate recognition component of a SCF (SKP1-CUL1-F-box protein) E3 ubiquitin-protein ligase complex which mediates the ubiquitination and subsequent proteasomal degradation of target proteins. Probably recognizes and binds to phosphorylated target proteins. Recognizes YBX1. The protein is F-box only protein 33 (FBXO33) of Homo sapiens (Human).